Here is a 349-residue protein sequence, read N- to C-terminus: Sperm acrosomal protein FSA-ACR.1 (349 aa).

Residues 1–8 form the signal peptide; it reads MKEVYLVG. The segment at 1–265 is disordered; the sequence is MKEVYLVGYA…EQPSGIPPSS (265 aa). Residues 63-114 show a composition bias toward basic and acidic residues; that stretch reads TSGEHTSVEHASAEHSSTEHTSGEHASGEHTSGERATGEHTSSEHATSEHTS. Polar residues-rich tracts occupy residues 117-142 and 154-171; these read QPSG…SGEQ and SGEQ…TSGE. Over residues 178–189 the composition is skewed to basic and acidic residues; it reads PSGEHAVAEKPS. Residues 221-248 show a composition bias toward low complexity; sequence EQASIEKASSEQASAEQASAEQASSEQA. N-linked (GlcNAc...) asparagine glycosylation is present at asparagine 342.

To acrosomal proteins SP-10. In terms of tissue distribution, testis.

It localises to the cytoplasmic vesicle. Its subcellular location is the secretory vesicle. The protein localises to the acrosome. This chain is Sperm acrosomal protein FSA-ACR.1, found in Vulpes vulpes (Red fox).